The chain runs to 102 residues: Small ribosomal subunit protein uS10 (102 aa).

This sequence belongs to the universal ribosomal protein uS10 family. In terms of assembly, part of the 30S ribosomal subunit.

Its function is as follows. Involved in the binding of tRNA to the ribosomes. The chain is Small ribosomal subunit protein uS10 from Phenylobacterium zucineum (strain HLK1).